Consider the following 1034-residue polypeptide: Ice nucleation protein InaU (1034 aa).

An octapeptide periodicity region spans residues 162–993 (ATYGSTLSGT…LTAGENSVLI (832 aa)). 6 disordered regions span residues 260–287 (YGSTQTAGEDSSLTAGYGSTQTAQKGSD), 311–342 (TQTAGEESTQTAGYGSTQTAQKGSDLTAGYGS), 356–383 (YGSTQTAGEDSSLTAGYGSTQTAQKGSD), 407–438 (TQTAGEESTQTAGYGSTQTAQKGSDLTAGYGS), 452–480 (YGSTQTAGEDSSLTAGYGSTQTAQKGSDL), and 570–597 (AREGSDLTAGYGSTQTAQENSDLTTGYG). Composition is skewed to polar residues over residues 261-286 (GSTQTAGEDSSLTAGYGSTQTAQKGS), 311-334 (TQTAGEESTQTAGYGSTQTAQKGS), 357-382 (GSTQTAGEDSSLTAGYGSTQTAQKGS), 407-430 (TQTAGEESTQTAGYGSTQTAQKGS), 453-480 (GSTQTAGEDSSLTAGYGSTQTAQKGSDL), and 580-592 (YGSTQTAQENSDL).

Belongs to the bacterial ice nucleation protein family.

It is found in the cell outer membrane. Ice nucleation proteins enable bacteria to nucleate crystallization in supercooled water. The sequence is that of Ice nucleation protein InaU (inaU) from Pantoea ananas (Erwinia uredovora).